The sequence spans 268 residues: tRNA pseudouridine synthase A (268 aa).

Asp63 serves as the catalytic Nucleophile. Tyr122 is a substrate binding site.

Belongs to the tRNA pseudouridine synthase TruA family. Homodimer.

The catalysed reaction is uridine(38/39/40) in tRNA = pseudouridine(38/39/40) in tRNA. Formation of pseudouridine at positions 38, 39 and 40 in the anticodon stem and loop of transfer RNAs. The sequence is that of tRNA pseudouridine synthase A from Treponema denticola (strain ATCC 35405 / DSM 14222 / CIP 103919 / JCM 8153 / KCTC 15104).